A 148-amino-acid polypeptide reads, in one-letter code: Large ribosomal subunit protein uL13 (148 aa).

This sequence belongs to the universal ribosomal protein uL13 family. Part of the 50S ribosomal subunit.

This protein is one of the early assembly proteins of the 50S ribosomal subunit, although it is not seen to bind rRNA by itself. It is important during the early stages of 50S assembly. The sequence is that of Large ribosomal subunit protein uL13 from Lacticaseibacillus casei (strain BL23) (Lactobacillus casei).